We begin with the raw amino-acid sequence, 348 residues long: Secreted frizzled-related protein 4 (348 aa).

The first 18 residues, 1 to 18, serve as a signal peptide directing secretion; that stretch reads MLLSILVALCLCVRLALG. The 121-residue stretch at 19-139 folds into the FZ domain; that stretch reads VRGAPCEAVR…VYDRGVCISP (121 aa). Disulfide bonds link C24–C85, C32–C78, C69–C108, C97–C136, and C101–C125. N-linked (GlcNAc...) asparagine glycosylation is found at N38 and N68. N-linked (GlcNAc...) asparagine glycosylation is found at N116, N194, and N240. Residues 178–296 form the NTR domain; the sequence is CKCKKVKPTL…WEERLQEQQR (119 aa). The segment covering 289 to 303 has biased composition (basic and acidic residues); the sequence is ERLQEQQRTTQDKKQ. The segment at 289–348 is disordered; it reads ERLQEQQRTTQDKKQIASRTSRSNPPKPKGRSPASKPASPKKNIKARSAPKKSNPKKSTS. Residues 330 to 348 are compositionally biased toward basic residues; sequence KNIKARSAPKKSNPKKSTS.

It belongs to the secreted frizzled-related protein (sFRP) family. As to expression, expressed in the involuting mammary gland, ovarian corpus luteum and prostate. In ovaries, low levels found in granulosa cells. High levels in corpora lutea of pregnant animals.

The protein resides in the secreted. Its function is as follows. Soluble frizzled-related proteins (sFRPS) function as modulators of Wnt signaling through direct interaction with Wnts. They have a role in regulating cell growth and differentiation in specific cell types. SFRP4 plays a role in bone morphogenesis. May also act as a regulator of adult uterine morphology and function. May also increase apoptosis during ovulation possibly through modulation of FZ1/FZ4/WNT4 signaling. Has phosphaturic effects by specifically inhibiting sodium-dependent phosphate uptake. The sequence is that of Secreted frizzled-related protein 4 (Sfrp4) from Rattus norvegicus (Rat).